Consider the following 395-residue polypeptide: Nicotinate phosphoribosyltransferase (395 aa).

Residue His-222 is modified to Phosphohistidine; by autocatalysis.

Belongs to the NAPRTase family. Transiently phosphorylated on a His residue during the reaction cycle. Phosphorylation strongly increases the affinity for substrates and increases the rate of nicotinate D-ribonucleotide production. Dephosphorylation regenerates the low-affinity form of the enzyme, leading to product release.

It carries out the reaction nicotinate + 5-phospho-alpha-D-ribose 1-diphosphate + ATP + H2O = nicotinate beta-D-ribonucleotide + ADP + phosphate + diphosphate. It participates in cofactor biosynthesis; NAD(+) biosynthesis; nicotinate D-ribonucleotide from nicotinate: step 1/1. Catalyzes the synthesis of beta-nicotinate D-ribonucleotide from nicotinate and 5-phospho-D-ribose 1-phosphate at the expense of ATP. This is Nicotinate phosphoribosyltransferase from Polaromonas sp. (strain JS666 / ATCC BAA-500).